We begin with the raw amino-acid sequence, 849 residues long: Glycogen phosphorylase (849 aa).

Position 679 is an N6-(pyridoxal phosphate)lysine (K679).

Belongs to the glycogen phosphorylase family. The cofactor is pyridoxal 5'-phosphate.

It carries out the reaction [(1-&gt;4)-alpha-D-glucosyl](n) + phosphate = [(1-&gt;4)-alpha-D-glucosyl](n-1) + alpha-D-glucose 1-phosphate. Its function is as follows. Phosphorylase is an important allosteric enzyme in carbohydrate metabolism. Enzymes from different sources differ in their regulatory mechanisms and in their natural substrates. However, all known phosphorylases share catalytic and structural properties. This is Glycogen phosphorylase (glgP) from Synechocystis sp. (strain ATCC 27184 / PCC 6803 / Kazusa).